Here is a 338-residue protein sequence, read N- to C-terminus: tRNA N6-adenosine threonylcarbamoyltransferase (338 aa).

Fe cation-binding residues include histidine 110 and histidine 114. Residues 132 to 136 (LLSGG), aspartate 165, glycine 178, and asparagine 274 contribute to the substrate site. Position 298 (aspartate 298) interacts with Fe cation.

The protein belongs to the KAE1 / TsaD family. Requires Fe(2+) as cofactor.

It localises to the cytoplasm. It carries out the reaction L-threonylcarbamoyladenylate + adenosine(37) in tRNA = N(6)-L-threonylcarbamoyladenosine(37) in tRNA + AMP + H(+). Its function is as follows. Required for the formation of a threonylcarbamoyl group on adenosine at position 37 (t(6)A37) in tRNAs that read codons beginning with adenine. Is involved in the transfer of the threonylcarbamoyl moiety of threonylcarbamoyl-AMP (TC-AMP) to the N6 group of A37, together with TsaE and TsaB. TsaD likely plays a direct catalytic role in this reaction. The chain is tRNA N6-adenosine threonylcarbamoyltransferase from Borrelia garinii subsp. bavariensis (strain ATCC BAA-2496 / DSM 23469 / PBi) (Borreliella bavariensis).